The following is a 290-amino-acid chain: ATP synthase gamma chain (290 aa).

This sequence belongs to the ATPase gamma chain family. In terms of assembly, F-type ATPases have 2 components, CF(1) - the catalytic core - and CF(0) - the membrane proton channel. CF(1) has five subunits: alpha(3), beta(3), gamma(1), delta(1), epsilon(1). CF(0) has three main subunits: a, b and c.

It is found in the cell membrane. Its function is as follows. Produces ATP from ADP in the presence of a proton gradient across the membrane. The gamma chain is believed to be important in regulating ATPase activity and the flow of protons through the CF(0) complex. In Buchnera aphidicola subsp. Acyrthosiphon pisum (strain 5A), this protein is ATP synthase gamma chain.